We begin with the raw amino-acid sequence, 471 residues long: Glutamate--tRNA ligase (471 aa).

Positions 9–19 match the 'HIGH' region motif; the sequence is PSPTGYLHVGG. Cys98, Cys100, Cys125, and Asp127 together coordinate Zn(2+). Positions 237–241 match the 'KMSKS' region motif; that stretch reads KLSKR. Lys240 contributes to the ATP binding site.

This sequence belongs to the class-I aminoacyl-tRNA synthetase family. Glutamate--tRNA ligase type 1 subfamily. In terms of assembly, monomer. Zn(2+) serves as cofactor.

It is found in the cytoplasm. The catalysed reaction is tRNA(Glu) + L-glutamate + ATP = L-glutamyl-tRNA(Glu) + AMP + diphosphate. Catalyzes the attachment of glutamate to tRNA(Glu) in a two-step reaction: glutamate is first activated by ATP to form Glu-AMP and then transferred to the acceptor end of tRNA(Glu). The sequence is that of Glutamate--tRNA ligase from Yersinia pseudotuberculosis serotype O:1b (strain IP 31758).